Reading from the N-terminus, the 201-residue chain is Charged multivesicular body protein 6 (201 aa).

The N-myristoyl glycine moiety is linked to residue G2. Residues 10-145 (QSRVTEQDKA…YQRQIDELLA (136 aa)) adopt a coiled-coil conformation. Position 119 is a phosphoserine (S119). T130 carries the phosphothreonine modification. A Type-2 MIT-interacting motif motif is present at residues 168 to 179 (IELPEVPSEPLP). The tract at residues 170–181 (LPEVPSEPLPEK) is interaction with VPS4A.

This sequence belongs to the SNF7 family. As to quaternary structure, probable core component of the endosomal sorting required for transport complex III (ESCRT-III). ESCRT-III components are thought to multimerize to form a flat lattice on the perimeter membrane of the endosome. Several assembly forms of ESCRT-III may exist that interact and act sequentially. Interacts with VPS4A; the interaction is direct. Interacts with VPS4B; the interaction is direct. Interacts with CHMP4A, CHMP4B and CHMP4C. Interacts with SNF8, VPS25 and VPS36. In terms of processing, ISGylated in a CHMP5-dependent manner. Isgylation weakens its interaction with VPS4A. Ubiquitously expressed.

The protein resides in the endomembrane system. It localises to the endosome membrane. Its subcellular location is the late endosome membrane. It is found in the membrane. Functionally, probable core component of the endosomal sorting required for transport complex III (ESCRT-III) which is involved in multivesicular bodies (MVBs) formation and sorting of endosomal cargo proteins into MVBs. MVBs contain intraluminal vesicles (ILVs) that are generated by invagination and scission from the limiting membrane of the endosome and mostly are delivered to lysosomes enabling degradation of membrane proteins, such as stimulated growth factor receptors, lysosomal enzymes and lipids. The MVB pathway appears to require the sequential function of ESCRT-O, -I,-II and -III complexes. ESCRT-III proteins mostly dissociate from the invaginating membrane before the ILV is released. The ESCRT machinery also functions in topologically equivalent membrane fission events, such as the terminal stages of cytokinesis and the budding of enveloped viruses (HIV-1 and other lentiviruses). ESCRT-III proteins are believed to mediate the necessary vesicle extrusion and/or membrane fission activities, possibly in conjunction with the AAA ATPase VPS4. In the ESCRT-III complex, it probably serves as an acceptor for the ESCRT-II complex on endosomal membranes. This Homo sapiens (Human) protein is Charged multivesicular body protein 6 (CHMP6).